The chain runs to 228 residues: Aquaporin Z (228 aa).

Transmembrane regions (helical) follow at residues 1–21 (MLNK…GGCG) and 23–43 (AILA…ALAF). The NPA 1 motif lies at 63 to 65 (NPA). The next 3 helical transmembrane spans lie at 82 to 102 (IPYW…LYVI), 129 to 149 (MMAG…IILG), and 154 to 174 (LAPA…IHLV). Residues 184-186 (NPA) carry the NPA 2 motif. A helical transmembrane segment spans residues 205-225 (LFWVAPLVGAVIGAIIWKGLL).

It belongs to the MIP/aquaporin (TC 1.A.8) family. In terms of assembly, homotetramer.

The protein resides in the cell inner membrane. It catalyses the reaction H2O(in) = H2O(out). Functionally, channel that permits osmotically driven movement of water in both directions. It is involved in the osmoregulation and in the maintenance of cell turgor during volume expansion in rapidly growing cells. It mediates rapid entry or exit of water in response to abrupt changes in osmolarity. In Brucella melitensis biotype 1 (strain ATCC 23456 / CCUG 17765 / NCTC 10094 / 16M), this protein is Aquaporin Z.